The following is a 625-amino-acid chain: Sphingomyelin phosphodiesterase (625 aa).

The segment at 1 to 20 (MPRHGVSPGQGLPRSGREQA) is disordered. The first 40 residues, 1–40 (MPRHGVSPGQGLPRSGREQASDRSLGAPCLRLLWLGLALA), serve as a signal peptide directing secretion. Residues 81–165 (WNLTCPTCKG…LLGSSCGHWD (85 aa)) form the Saposin B-type domain. An N-linked (GlcNAc...) asparagine glycan is attached at Asn-82. Cystine bridges form between Cys-85-Cys-161, Cys-88-Cys-153, and Cys-116-Cys-127. N-linked (GlcNAc...) asparagine glycosylation occurs at Asn-171. Zn(2+) is bound by residues Asp-202 and His-204. Cystine bridges form between Cys-217–Cys-222 and Cys-223–Cys-246. Zn(2+)-binding residues include Asp-274 and Asn-314. N-linked (GlcNAc...) asparagine glycosylation is found at Asn-331 and Asn-391. A disulfide bond links Cys-381 and Cys-427. 3 residues coordinate Zn(2+): His-421, His-453, and His-455. An N-linked (GlcNAc...) asparagine glycan is attached at Asn-499. A Phosphoserine modification is found at Ser-504. Asn-516 carries an N-linked (GlcNAc...) asparagine glycan. 2 disulfide bridges follow: Cys-580–Cys-584 and Cys-590–Cys-603.

It belongs to the acid sphingomyelinase family. As to quaternary structure, monomer. Interacts with SORT1; the interaction is required for SMPD1 targeting to lysosomes. The cofactor is Zn(2+). In terms of processing, proteolytically processed. Mature lysosomal form arises from C-terminal proteolytic processing of pro-sphingomyelin phosphodiesterase. Both lysosomal and secreted forms are glycosylated but they show a differential pattern of glycosylation. Post-translationally, phosphorylated at Ser-504 by PRKCD upon stress stimuli. Phosphorylation is required for secretion. In terms of processing, this form is generated following cleavage by CASP7 in the extracellular milieu. It shows increased activity.

Its subcellular location is the lysosome. It localises to the lipid droplet. It is found in the secreted. The protein localises to the extracellular space. The enzyme catalyses a sphingomyelin + H2O = phosphocholine + an N-acylsphing-4-enine + H(+). The catalysed reaction is N-(octadecanoyl)-sphing-4-enine-1-phosphocholine + H2O = N-octadecanoylsphing-4-enine + phosphocholine + H(+). It catalyses the reaction a 1,2-diacyl-sn-glycero-3-phosphocholine + H2O = phosphocholine + a 1,2-diacyl-sn-glycerol + H(+). It carries out the reaction 1,2-dihexadecanoyl-sn-glycero-3-phosphocholine + H2O = 1,2-dihexadecanoyl-sn-glycerol + phosphocholine + H(+). Its activity is regulated as follows. Hydrolysis of liposomal sphingomyelin is stimulated by incorporation of diacylglycerol (DAG), ceramide and free fatty acids into the liposomal membranes. Phosphatidylcholine hydrolysis is inhibited by incorporation of cholesterol, ceramide, DAG, monoacylglycerol and fatty acids. Converts sphingomyelin to ceramide. Exists as two enzymatic forms that arise from alternative trafficking of a single protein precursor, one that is targeted to the endolysosomal compartment, whereas the other is released extracellularly. However, in response to various forms of stress, lysosomal exocytosis may represent a major source of the secretory form. Its function is as follows. In the lysosomes, converts sphingomyelin to ceramide. Plays an important role in the export of cholesterol from the intraendolysosomal membranes. Also has phospholipase C activities toward 1,2-diacylglycerolphosphocholine and 1,2-diacylglycerolphosphoglycerol. Modulates stress-induced apoptosis through the production of ceramide. Functionally, when secreted, modulates cell signaling with its ability to reorganize the plasma membrane by converting sphingomyelin to ceramide. Secreted form is increased in response to stress and inflammatory mediators such as IL1B, IFNG or TNF as well as upon infection with bacteria and viruses. Produces the release of ceramide in the outer leaflet of the plasma membrane playing a central role in host defense. Ceramide reorganizes these rafts into larger signaling platforms that are required to internalize bacteria, induce apoptosis and regulate the cytokine response in infected cells. In wounded cells, the lysosomal form is released extracellularly in the presence of Ca(2+) and promotes endocytosis and plasma membrane repair. In terms of biological role, this form is generated following cleavage by CASP7 in the extracellular milieu in response to bacterial infection. It shows increased ability to convert sphingomyelin to ceramide and promotes plasma membrane repair. Plasma membrane repair by ceramide counteracts the action of gasdermin-D (GSDMD) perforin (PRF1) pores that are formed in response to bacterial infection. The protein is Sphingomyelin phosphodiesterase (SMPD1) of Bos taurus (Bovine).